A 504-amino-acid chain; its full sequence is Fibroblast growth factor receptor-like 1 (504 aa).

A signal peptide spans 1 to 24 (MTPSPLLLLLLPPLLLGAFPPAAA). Over 25-378 (ARGPPKMADK…SSSATSLPWP (354 aa)) the chain is Extracellular. Positions 29-115 (PKMADKVVPR…GSLSVNYTLV (87 aa)) constitute an Ig-like C2-type 1 domain. A disulfide bridge connects residues cysteine 51 and cysteine 99. N-linked (GlcNAc...) asparagine glycosylation occurs at asparagine 111. Residues 123–155 (GKESLGPDSSSGGQEDPASQQWARPRFTQPSKM) are disordered. The segment covering 129–144 (PDSSSGGQEDPASQQW) has biased composition (polar residues). Ig-like C2-type domains lie at 147–237 (PRFT…YKVD) and 246–354 (PVLT…AFLT). Cysteine 172 and cysteine 221 are joined by a disulfide. N-linked (GlcNAc...) asparagine glycosylation is found at asparagine 231, asparagine 255, and asparagine 293. An intrachain disulfide couples cysteine 268 to cysteine 338. A helical transmembrane segment spans residues 379 to 399 (VVIGIPAGAVFILGTLLLWLC). The Cytoplasmic segment spans residues 400–504 (QAQKKPCTPA…KVHQHIHYQC (105 aa)). Over residues 407–418 (TPAPAPPLPGHR) the composition is skewed to pro residues. The tract at residues 407–435 (TPAPAPPLPGHRPPGTARDRSGDKDLPSL) is disordered. A compositionally biased stretch (basic and acidic residues) spans 423-432 (ARDRSGDKDL).

Interacts with FGF2 with a low affinity. Expressed preferentially in cartilaginous tissues and pancreas. Highly expressed in the liver, kidney, heart, brain and skeletal muscle. Weakly expressed in the lung, small intestine and spleen.

The protein localises to the membrane. Has a negative effect on cell proliferation. The protein is Fibroblast growth factor receptor-like 1 (FGFRL1) of Homo sapiens (Human).